The primary structure comprises 59 residues: Large ribosomal subunit protein uL30 (59 aa).

The protein belongs to the universal ribosomal protein uL30 family. As to quaternary structure, part of the 50S ribosomal subunit.

In Psychrobacter cryohalolentis (strain ATCC BAA-1226 / DSM 17306 / VKM B-2378 / K5), this protein is Large ribosomal subunit protein uL30.